A 222-amino-acid chain; its full sequence is Putative O-methyltransferase MAV_1364 (222 aa).

S-adenosyl-L-methionine-binding positions include Val-49, Glu-71, 73-74, Ser-79, Asp-97, and Ile-98; that span reads GT. Asp-145 provides a ligand contact to substrate. Asp-147 serves as a coordination point for S-adenosyl-L-methionine.

The protein belongs to the class I-like SAM-binding methyltransferase superfamily. Cation-dependent O-methyltransferase family.

The sequence is that of Putative O-methyltransferase MAV_1364 from Mycobacterium avium (strain 104).